The primary structure comprises 35 residues: Cupiennin-2a (35 aa).

At Lys35 the chain carries Lysine amide.

In terms of tissue distribution, expressed by the venom gland.

It localises to the secreted. The sequence is that of Cupiennin-2a from Cupiennius salei (American wandering spider).